Here is a 114-residue protein sequence, read N- to C-terminus: MNEILVVTVNEVANARIARVVGPVYGTSIRSRTIVGNMLGGIRAIFGGSQEGYIAMVNQTRDEAIAALKAHAASLGANAVIGMRFDSGEFDAGQGQAMNEVTAYGTAVILEAVM.

This sequence belongs to the UPF0145 family.

The chain is UPF0145 protein Acry_1752 from Acidiphilium cryptum (strain JF-5).